Reading from the N-terminus, the 115-residue chain is MTGPARSGAAIRGAGRTVARGLIFLIQLYRHMVSPLRPATCRFVPTCSQYAVDALDEYGLIRGSWLAAARLAKCGPWHQGGWDPIPERPGCRVNCQDASDAWAVRATRGESGSLV.

It belongs to the UPF0161 family.

Its subcellular location is the cell membrane. Its function is as follows. Could be involved in insertion of integral membrane proteins into the membrane. This chain is Putative membrane protein insertion efficiency factor, found in Mycolicibacterium paratuberculosis (strain ATCC BAA-968 / K-10) (Mycobacterium paratuberculosis).